The primary structure comprises 398 residues: Putative F-box protein At3g17620 (398 aa).

Positions 1 to 45 constitute an F-box domain; sequence MMSDLPRDLLEERLSRVPVKSLREARFTCKNWKTLSKKRSFTKKH.

The protein is Putative F-box protein At3g17620 of Arabidopsis thaliana (Mouse-ear cress).